Consider the following 453-residue polypeptide: HTH-type pyridoxine biosynthesis transcriptional regulator PdxR (453 aa).

In terms of domain architecture, HTH gntR-type spans 15–83; that stretch reads TSIPTQLTEQ…RGSGTTINPD (69 aa). Residues 43 to 62 constitute a DNA-binding region (H-T-H motif); it reads SRSLSTQLGVSRGSVVTAYD.

In the C-terminal section; belongs to the class-I pyridoxal-phosphate-dependent aminotransferase family. Requires pyridoxal 5'-phosphate as cofactor.

Functionally, may have a regulatory function in pyridoxine biosynthesis. Is said to also have an aminotransferase activity in valine biosynthesis as a double inactivation of ilvE and pdxR results in an auxotrophic requirement for valine. The polypeptide is HTH-type pyridoxine biosynthesis transcriptional regulator PdxR (pdxR) (Corynebacterium glutamicum (strain ATCC 13032 / DSM 20300 / JCM 1318 / BCRC 11384 / CCUG 27702 / LMG 3730 / NBRC 12168 / NCIMB 10025 / NRRL B-2784 / 534)).